The primary structure comprises 487 residues: Glutamyl-tRNA(Gln) amidotransferase subunit A (487 aa).

Catalysis depends on charge relay system residues lysine 74 and serine 149. The active-site Acyl-ester intermediate is serine 173.

The protein belongs to the amidase family. GatA subfamily. In terms of assembly, heterotrimer of A, B and C subunits.

It catalyses the reaction L-glutamyl-tRNA(Gln) + L-glutamine + ATP + H2O = L-glutaminyl-tRNA(Gln) + L-glutamate + ADP + phosphate + H(+). Allows the formation of correctly charged Gln-tRNA(Gln) through the transamidation of misacylated Glu-tRNA(Gln) in organisms which lack glutaminyl-tRNA synthetase. The reaction takes place in the presence of glutamine and ATP through an activated gamma-phospho-Glu-tRNA(Gln). The protein is Glutamyl-tRNA(Gln) amidotransferase subunit A of Synechococcus sp. (strain CC9311).